A 314-amino-acid polypeptide reads, in one-letter code: Nodulation protein D 2 (314 aa).

The 58-residue stretch at 6–63 (LDLNLLVVLDALMTERNLTAAARSINLSQPAMSAAVARLRTNFRDDLFAMAGREFIPT) folds into the HTH lysR-type domain. Residues 23-42 (LTAAARSINLSQPAMSAAVA) constitute a DNA-binding region (H-T-H motif).

It belongs to the LysR transcriptional regulatory family.

In terms of biological role, nodD regulates the expression of the nodABCFE genes which encode other nodulation proteins. NodD is also a negative regulator of its own expression. Binds flavonoids as inducers. The polypeptide is Nodulation protein D 2 (nodD2) (Rhizobium tropici).